The following is a 122-amino-acid chain: Histone H2B (122 aa).

A disordered region spans residues 1-31 (MPPKPSGKGQKKAGKAKGAPSTNKKRKRKRK). At P2 the chain carries N,N-dimethylproline. An Isoglutamyl lysine isopeptide (Gln-Lys) (interchain with K-5 in histone H4) cross-link involves residue Q10. Residue S109 is glycosylated (O-linked (GlcNAc) serine). Residue K117 forms a Glycyl lysine isopeptide (Lys-Gly) (interchain with G-Cter in ubiquitin) linkage.

Belongs to the histone H2B family. The nucleosome is a histone octamer containing two molecules each of H2A, H2B, H3 and H4 assembled in one H3-H4 heterotetramer and two H2A-H2B heterodimers. The octamer wraps approximately 147 bp of DNA. Monoubiquitination of Lys-117 gives a specific tag for epigenetic transcriptional activation and is also prerequisite for histone H3 'Lys-4' and 'Lys-79' methylation. Post-translationally, glcNAcylation at Ser-109 promotes monoubiquitination of Lys-117. It fluctuates in response to extracellular glucose, and associates with transcribed genes.

The protein resides in the nucleus. The protein localises to the chromosome. In terms of biological role, core component of nucleosome. Nucleosomes wrap and compact DNA into chromatin, limiting DNA accessibility to the cellular machineries which require DNA as a template. Histones thereby play a central role in transcription regulation, DNA repair, DNA replication and chromosomal stability. DNA accessibility is regulated via a complex set of post-translational modifications of histones, also called histone code, and nucleosome remodeling. This Patiria pectinifera (Starfish) protein is Histone H2B.